A 1097-amino-acid chain; its full sequence is MSSSALQIAKTATYLPDLVEVQRASFKWFLEKGLIEELKSFSPITDYTGKLELHFIGEEYRLKRPRHDVEEAKRRDATFASQMYVTCRLINKETGEIKEQEVFIGELPLMTERGTFIINGAERVIVNQIVRSPGVYFKDEMDKNGRRTYNASVIPNRGAWLKFETDKNNLLYVRVDKTRKINAHVLMRAMGLSDNDVVDKLRHPEFYKQSIDAANDEGINSEDQALLELYKKLRPGEPPSVSGGQQLLHSRFFDPKRYDLGRVGRYKINKKLRLTVPDNVRTLTHEDVLSTIDYLINLELDIGGASLDDIDHLGNRRVRSVGELLQNQVRVGLNRLERIIKERMTVGETDSLTPAQLVNPKPLVAAIKEFFGSSQLSQFMDQTNPLAELTHKRRISALGPGGLTRERAGFAVRDIHPSHYGRLCPIETPEGPNAGLINSLATHARVNEYGFIETPFWEVEKGRVIKEGKPVYLSADLEDECRVAPGDVATDKSGNILANLIPVRYRQDFEKVPPHQVDYVQLSPVQVISVATSLIPFLEHDDANRALMGSNMQRQAVPLLRPERPLVGTGLESQVARDSGMVPITKVNGIVSYVDANEIVVKDVDGNEHVHYLQKYQRSNQDTCLNQRPIVKNGDQVISGQVLADGSACEGGEIALGQNVLIAYMPWEGYNYEDAILVSERMVTDDLYTSVHIEKYEIEARQTKLGPEEITREIPNISEESLNNLDEMGIIRTGAFVESGDILVGKVTPKGESDQPPEEKLLRAIFGEKARDVRDNSLRVPKTEKGRVLDVRIYTREQGDELPPGANMVVRVYVAQRRKIQVGDKMAGRHGNKGIISRILPREDMPYLPDGTPVDIVLNPLGVPSRMNVGQVFELLMGWAASNLNCRVKVVPFDEMYGAEKSHQTVQAFLKEASKQNGKDWVYNPEDPGKLLLKDGRTGEPFDQPVAVGYSHFLKLVHLVDDKIHARSTGPYSLVTQQPLGGKAQQGGQRLGEMEVWALEAYGAAYTLQELLTVKSDDMQGRNEALNAIVKGKPIPRPGTPESFKVLMRELQSLGLDIGVYTDEGKEVDLMQDVNPRRNTPSRPTYESLGTSEYEED.

Residues 1070 to 1097 (LMQDVNPRRNTPSRPTYESLGTSEYEED) are disordered. Residues 1077–1091 (RRNTPSRPTYESLGT) are compositionally biased toward polar residues.

It belongs to the RNA polymerase beta chain family. In cyanobacteria the RNAP catalytic core is composed of 2 alpha, 1 beta, 1 beta', 1 gamma and 1 omega subunit. When a sigma factor is associated with the core the holoenzyme is formed, which can initiate transcription.

It carries out the reaction RNA(n) + a ribonucleoside 5'-triphosphate = RNA(n+1) + diphosphate. Functionally, DNA-dependent RNA polymerase catalyzes the transcription of DNA into RNA using the four ribonucleoside triphosphates as substrates. The protein is DNA-directed RNA polymerase subunit beta of Prochlorococcus marinus (strain MIT 9515).